Consider the following 163-residue polypeptide: Nucleotide-binding protein CKO_02735 (163 aa).

Belongs to the YajQ family.

Nucleotide-binding protein. This chain is Nucleotide-binding protein CKO_02735, found in Citrobacter koseri (strain ATCC BAA-895 / CDC 4225-83 / SGSC4696).